The chain runs to 553 residues: Glucose-6-phosphate isomerase (553 aa).

Glutamate 355 functions as the Proton donor in the catalytic mechanism. Active-site residues include histidine 386 and lysine 513.

Belongs to the GPI family.

It is found in the cytoplasm. It carries out the reaction alpha-D-glucose 6-phosphate = beta-D-fructose 6-phosphate. Its pathway is carbohydrate biosynthesis; gluconeogenesis. It participates in carbohydrate degradation; glycolysis; D-glyceraldehyde 3-phosphate and glycerone phosphate from D-glucose: step 2/4. In terms of biological role, catalyzes the reversible isomerization of glucose-6-phosphate to fructose-6-phosphate. This is Glucose-6-phosphate isomerase from Baumannia cicadellinicola subsp. Homalodisca coagulata.